Reading from the N-terminus, the 102-residue chain is MAKQKIRIRLKAYDHRVIDQSAEKIVETAKRSGAEVSGPIPLPTEKSVYTIIRAVHMYKDSREQFEQRTHKRLIDIVNPTPKTVDALMGLNLPSGVDIEIKL.

It belongs to the universal ribosomal protein uS10 family. Part of the 30S ribosomal subunit.

In terms of biological role, involved in the binding of tRNA to the ribosomes. In Staphylococcus haemolyticus (strain JCSC1435), this protein is Small ribosomal subunit protein uS10.